The chain runs to 211 residues: Thiamine-phosphate synthase (211 aa).

4-amino-2-methyl-5-(diphosphooxymethyl)pyrimidine contacts are provided by residues 37–41 (QLRIK) and Asn-69. Mg(2+)-binding residues include Asp-70 and Asp-89. Position 108 (Ser-108) interacts with 4-amino-2-methyl-5-(diphosphooxymethyl)pyrimidine. Position 134–136 (134–136 (TQT)) interacts with 2-[(2R,5Z)-2-carboxy-4-methylthiazol-5(2H)-ylidene]ethyl phosphate. Residue Lys-137 coordinates 4-amino-2-methyl-5-(diphosphooxymethyl)pyrimidine. Residues Gly-166 and 186-187 (VS) contribute to the 2-[(2R,5Z)-2-carboxy-4-methylthiazol-5(2H)-ylidene]ethyl phosphate site.

This sequence belongs to the thiamine-phosphate synthase family. Mg(2+) serves as cofactor.

It carries out the reaction 2-[(2R,5Z)-2-carboxy-4-methylthiazol-5(2H)-ylidene]ethyl phosphate + 4-amino-2-methyl-5-(diphosphooxymethyl)pyrimidine + 2 H(+) = thiamine phosphate + CO2 + diphosphate. The catalysed reaction is 2-(2-carboxy-4-methylthiazol-5-yl)ethyl phosphate + 4-amino-2-methyl-5-(diphosphooxymethyl)pyrimidine + 2 H(+) = thiamine phosphate + CO2 + diphosphate. The enzyme catalyses 4-methyl-5-(2-phosphooxyethyl)-thiazole + 4-amino-2-methyl-5-(diphosphooxymethyl)pyrimidine + H(+) = thiamine phosphate + diphosphate. It functions in the pathway cofactor biosynthesis; thiamine diphosphate biosynthesis; thiamine phosphate from 4-amino-2-methyl-5-diphosphomethylpyrimidine and 4-methyl-5-(2-phosphoethyl)-thiazole: step 1/1. In terms of biological role, condenses 4-methyl-5-(beta-hydroxyethyl)thiazole monophosphate (THZ-P) and 2-methyl-4-amino-5-hydroxymethyl pyrimidine pyrophosphate (HMP-PP) to form thiamine monophosphate (TMP). This chain is Thiamine-phosphate synthase, found in Escherichia coli O1:K1 / APEC.